Consider the following 461-residue polypeptide: Putative ankyrin repeat protein FPV218 (461 aa).

ANK repeat units lie at residues 1-28, 31-61, 65-94, 96-116, 120-149, 153-182, 186-213, 217-248, 250-277, 281-312, 358-385, and 431-460; these read MLSLYYAINYKNRKMVERLLREGVHPDS, KGFYRPLVKSILLRDVDLVSILLQNGANPNN, ETVSPLAIAIKVNSPTIVSLLLDYNADTSL, PLYVSFPIIKVLVYHGIDVNV, ESRSFLHYAAKNDDVDTVISLILHGANVNV, KGLSPLHHAVSKKTTLTAKILLENGARVNI, LGRLPLHLGANTYEMVKLLIDYGSPIDI, NGSTPLHYAIWKSSLDTIRLLVNVSTINALDN, CNSPLHYIILSETEILVELLLRGADITI, CGNTPLDILCKLRIKKLDNIKAIISNAFLMRE, NGPTILDVCTDKVHFLHRLVNARDNVQY, and LPYELKHYIIEYINIEFIKSLLEHTNLKNK.

This Fowlpox virus (strain NVSL) (FPV) protein is Putative ankyrin repeat protein FPV218.